Here is a 126-residue protein sequence, read N- to C-terminus: Acidic phospholipase A2 S1E6-a (126 aa).

The signal sequence occupies residues 1–3; sequence VEG. 7 disulfide bridges follow: C29–C119, C31–C47, C46–C98, C52–C126, C53–C91, C60–C84, and C78–C89. The Ca(2+) site is built by Y30, G32, and G34. Residue H50 is part of the active site. Residue D51 coordinates Ca(2+). D92 is a catalytic residue.

In terms of assembly, homodimer. It depends on Ca(2+) as a cofactor. In terms of tissue distribution, expressed by the venom gland.

It localises to the secreted. The catalysed reaction is a 1,2-diacyl-sn-glycero-3-phosphocholine + H2O = a 1-acyl-sn-glycero-3-phosphocholine + a fatty acid + H(+). Functionally, snake venom phospholipase A2 (PLA2) that inhibits ADP-induced platelet aggregation. PLA2 catalyzes the calcium-dependent hydrolysis of the 2-acyl groups in 3-sn-phosphoglycerides. The protein is Acidic phospholipase A2 S1E6-a of Calloselasma rhodostoma (Malayan pit viper).